An 867-amino-acid polypeptide reads, in one-letter code: Nuclear body protein SP140 (867 aa).

Residues 22-138 (VAEIQNVEGQ…IYRSFQNVCY (117 aa)) enclose the HSR domain. Disordered regions lie at residues 260–341 (TYST…EEPQ), 365–432 (TPQV…SEEL), and 486–580 (IANN…KHKD). The segment covering 268–301 (KQGEEEGRNSPRKRNQDKEKYQESPEGRDKETFD) has biased composition (basic and acidic residues). 2 stretches are compositionally biased toward acidic residues: residues 323–341 (EGEEGSDDCSEMCDGEEPQ) and 384–397 (EGEEGSDDCSEMCD). Low complexity predominate over residues 404–416 (ASSSLARRGSVSS). Basic residues-rich tracts occupy residues 494 to 512 (KPKRKRRKKRGHGWSRMRM) and 567 to 577 (QKRVRSRASRK). The Nuclear localization signal motif lies at 495–514 (PKRKRRKKRGHGWSRMRMRR). Residues 580-661 (DETVDFKAPL…RWLMENGFLP (82 aa)) enclose the SAND domain. The PHD-type zinc finger occupies 690–736 (LDECEVCRDGGELFCCDTCSRVFHEDCHIPPVEAERTPWNCIFCRMK). At T726 the chain carries Phosphothreonine. Positions 754 to 857 (QMCPEEQLKC…AEFEKNFKEV (104 aa)) constitute a Bromo domain.

In terms of assembly, interacts with PIN1. In terms of processing, phosphorylation at Thr-726 promotes binding of PIN1 and subsequent isomerization of Pro-727. In terms of tissue distribution, high levels in spleen and peripheral blood leukocytes, much lower levels in tonsils, thymus, prostate, ovary, small intestine, and colon. Very low levels in heart, brain, placenta, lung, liver, skeletal muscle, kidney, and pancreas. Not detected in brain, liver and muscle.

The protein resides in the nucleus. It localises to the PML body. The protein localises to the cytoplasm. In terms of biological role, component of the nuclear body, also known as nuclear domain 10, PML oncogenic domain, and KR body. May be involved in the pathogenesis of acute promyelocytic leukemia and viral infection. May play a role in chromatin-mediated regulation of gene expression although it does not bind to histone H3 tails. This chain is Nuclear body protein SP140, found in Homo sapiens (Human).